A 298-amino-acid chain; its full sequence is MAEFMEPNLVSNFDDEKSNSVDTRSIFQMGFPLESEEIVREMIEKERQHSPRDDYLKRLRNGDLDFNVRIQALGWIWKACEELQFGPLCICLAMNYLDRFLSVHDLPSGKAWTVQLLAVACLSLAAKIEETNVPELMQLQVGAPMFVFEAKSVQRMELLVLNVLRWRLRAVTPCSYVRYFLSKINGYDQEPHSRLVTRSLQVIASTTKGIDFLEFRASEIAAAVALSVSGEHFDKFSFSSSFSSLEKERVKKIGEMIERDGSSSSSQTPNNTVLQFKSRRYSHSLSTASVSSSLTSLS.

This sequence belongs to the cyclin family. Cyclin D subfamily. In terms of assembly, interacts with CDKA-1 to form a kinase complex.

Functionally, may promote cell division. This chain is Cyclin-D4-2 (CYCD4-2), found in Arabidopsis thaliana (Mouse-ear cress).